A 604-amino-acid polypeptide reads, in one-letter code: Glutamyl-tRNA(Gln) amidotransferase subunit B, mitochondrial (604 aa).

The N-terminal 48 residues, 1–48, are a transit peptide targeting the mitochondrion; sequence MIRQCLSRRGAYSRYRLAARGVELAEPFHHQSSRPQGRRNWSSSPRCS. Residues 28 to 57 form a disordered region; sequence FHHQSSRPQGRRNWSSSPRCSLDIRTDTPR. Polar residues predominate over residues 33-46; that stretch reads SRPQGRRNWSSSPR.

Belongs to the GatB/GatE family. GatB subfamily. As to quaternary structure, subunit of the heterotrimeric GatCAB amidotransferase (AdT) complex, composed of A, B and C subunits.

It localises to the mitochondrion. The enzyme catalyses L-glutamyl-tRNA(Gln) + L-glutamine + ATP + H2O = L-glutaminyl-tRNA(Gln) + L-glutamate + ADP + phosphate + H(+). Allows the formation of correctly charged Gln-tRNA(Gln) through the transamidation of misacylated Glu-tRNA(Gln) in the mitochondria. The reaction takes place in the presence of glutamine and ATP through an activated gamma-phospho-Glu-tRNA(Gln). The sequence is that of Glutamyl-tRNA(Gln) amidotransferase subunit B, mitochondrial from Ajellomyces dermatitidis (strain ER-3 / ATCC MYA-2586) (Blastomyces dermatitidis).